The primary structure comprises 313 residues: RHOMBOID-like protein 7 (313 aa).

Over residues 1–11 (MLSTAAEEDPE) the composition is skewed to acidic residues. The interval 1–24 (MLSTAAEEDPEGGSRETNNGGETT) is disordered. Over residues 15–24 (RETNNGGETT) the composition is skewed to polar residues. A run of 7 helical transmembrane segments spans residues 31–51 (SWII…VMYY), 112–132 (WLHA…YIGV), 143–163 (VGTI…LFLE), 166–186 (ISVG…SELL), 196–216 (GVAI…GTLP), 221–241 (FAHI…LIHP), and 269–289 (LCIV…VILF). Residue S171 is the Nucleophile of the active site. The Charge relay system role is filled by H223.

It belongs to the peptidase S54 family.

Its subcellular location is the membrane. It catalyses the reaction Cleaves type-1 transmembrane domains using a catalytic dyad composed of serine and histidine that are contributed by different transmembrane domains.. Functionally, probable rhomboid-type serine protease that catalyzes intramembrane proteolysis. May function in embryo development. The sequence is that of RHOMBOID-like protein 7 from Arabidopsis thaliana (Mouse-ear cress).